We begin with the raw amino-acid sequence, 357 residues long: Pre-mRNA-splicing factor RBM22 homolog (357 aa).

The C3H1-type zinc-finger motif lies at 153–180 (RNMARVCSFWRKNSCNRGDECPYLHKEI). Positions 222 to 295 (NKICIQGISE…CNLTVHLQDN (74 aa)) constitute an RRM domain.

This sequence belongs to the SLT11 family. In terms of assembly, probable component of the spliceosome C complex.

The protein resides in the nucleus. In terms of biological role, involved in pre-mRNA splicing. Binds RNA. The chain is Pre-mRNA-splicing factor RBM22 homolog from Plasmodium falciparum (isolate 3D7).